Here is a 400-residue protein sequence, read N- to C-terminus: Phosphoglycerate kinase (400 aa).

Substrate-binding positions include Asp19 to Asn21, Arg38, His61 to Arg64, Arg124, and Arg161. Residues Lys211, Gly299, Glu330, and Gly356–Ser359 each bind ATP.

It belongs to the phosphoglycerate kinase family. Monomer.

The protein localises to the cytoplasm. The enzyme catalyses (2R)-3-phosphoglycerate + ATP = (2R)-3-phospho-glyceroyl phosphate + ADP. The protein operates within carbohydrate degradation; glycolysis; pyruvate from D-glyceraldehyde 3-phosphate: step 2/5. The polypeptide is Phosphoglycerate kinase (Frankia alni (strain DSM 45986 / CECT 9034 / ACN14a)).